Here is a 150-residue protein sequence, read N- to C-terminus: UPF0336 protein SAV_4901 (150 aa).

The region spanning 8–126 (VGRSYPPTDP…GNDVVDVRGE (119 aa)) is the MaoC-like domain.

Belongs to the UPF0336 family.

The sequence is that of UPF0336 protein SAV_4901 from Streptomyces avermitilis (strain ATCC 31267 / DSM 46492 / JCM 5070 / NBRC 14893 / NCIMB 12804 / NRRL 8165 / MA-4680).